The primary structure comprises 627 residues: 1-deoxy-D-xylulose-5-phosphate synthase (627 aa).

Thiamine diphosphate-binding positions include H80 and 121-123 (GHS). Position 152 (D152) interacts with Mg(2+). Thiamine diphosphate-binding positions include 153 to 154 (GA), N181, Y288, and E370. Mg(2+) is bound at residue N181.

It belongs to the transketolase family. DXPS subfamily. In terms of assembly, homodimer. It depends on Mg(2+) as a cofactor. Thiamine diphosphate is required as a cofactor.

It carries out the reaction D-glyceraldehyde 3-phosphate + pyruvate + H(+) = 1-deoxy-D-xylulose 5-phosphate + CO2. It functions in the pathway metabolic intermediate biosynthesis; 1-deoxy-D-xylulose 5-phosphate biosynthesis; 1-deoxy-D-xylulose 5-phosphate from D-glyceraldehyde 3-phosphate and pyruvate: step 1/1. Catalyzes the acyloin condensation reaction between C atoms 2 and 3 of pyruvate and glyceraldehyde 3-phosphate to yield 1-deoxy-D-xylulose-5-phosphate (DXP). In Aliivibrio fischeri (strain MJ11) (Vibrio fischeri), this protein is 1-deoxy-D-xylulose-5-phosphate synthase.